Consider the following 203-residue polypeptide: Small ribosomal subunit protein uS4 (203 aa).

One can recognise an S4 RNA-binding domain in the interval 93 to 153 (RRLDNIVYRL…DKSKNLQQVK (61 aa)).

This sequence belongs to the universal ribosomal protein uS4 family. In terms of assembly, part of the 30S ribosomal subunit. Contacts protein S5. The interaction surface between S4 and S5 is involved in control of translational fidelity.

Functionally, one of the primary rRNA binding proteins, it binds directly to 16S rRNA where it nucleates assembly of the body of the 30S subunit. With S5 and S12 plays an important role in translational accuracy. In Lactobacillus gasseri (strain ATCC 33323 / DSM 20243 / BCRC 14619 / CIP 102991 / JCM 1131 / KCTC 3163 / NCIMB 11718 / NCTC 13722 / AM63), this protein is Small ribosomal subunit protein uS4.